The primary structure comprises 102 residues: Small ribosomal subunit protein uS10 (102 aa).

The disordered stretch occupies residues 34 to 61; that stretch reads MAGPIPLPTKTLKVTTRKSTDGEGSSSF.

Belongs to the universal ribosomal protein uS10 family. As to quaternary structure, part of the 30S ribosomal subunit.

In terms of biological role, involved in the binding of tRNA to the ribosomes. The protein is Small ribosomal subunit protein uS10 of Methanococcus aeolicus (strain ATCC BAA-1280 / DSM 17508 / OCM 812 / Nankai-3).